A 554-amino-acid chain; its full sequence is Sesquiterpene synthase 14a (554 aa).

Mg(2+) contacts are provided by aspartate 305, aspartate 309, aspartate 449, and glutamate 457. Residues 305–309 (DDLYD) carry the DDXXD motif motif.

The protein belongs to the terpene synthase family. Tpsa subfamily. Requires Mg(2+) as cofactor. The cofactor is Mn(2+). In terms of tissue distribution, mostly expressed in stem trichomes.

It carries out the reaction (2E,6E)-farnesyl diphosphate = beta-bisabolene + diphosphate. The catalysed reaction is (2E,6E)-farnesyl diphosphate = (Z)-alpha-bisabolene + diphosphate. It catalyses the reaction (2E,6E)-farnesyl diphosphate = beta-acoradiene + diphosphate. The enzyme catalyses (2E,6E)-farnesyl diphosphate = (E)-gamma-bisabolene + diphosphate. It carries out the reaction (2E,6E)-farnesyl diphosphate = (E)-beta-farnesene + diphosphate. The catalysed reaction is (2E,6E)-farnesyl diphosphate = (Z)-beta-farnesene + diphosphate. It catalyses the reaction (2E)-geranyl diphosphate = limonene + diphosphate. The enzyme catalyses (2E)-geranyl diphosphate = beta-myrcene + diphosphate. It participates in secondary metabolite biosynthesis; terpenoid biosynthesis. Functionally, sesquiterpene synthase involved in the biosynthesis of volatile compounds. Mediates the conversion of (2E,6E)-farnesyl diphosphate ((EE)-FPP) into beta-bisabolene, beta-farnesene, (E)-gamma-bisabolene, beta-acoradiene, selinene and (Z)-alpha-bisabolene. Low or no activity with (2Z,6Z)-farnesyl diphosphate ((ZZ)-FPP). Can act with a low efficiency as a monoterpene synthase with geranyl diphosphate (GPP) as substrate, thus producing beta-myrcene and limonene. In Solanum habrochaites (Wild tomato), this protein is Sesquiterpene synthase 14a.